Consider the following 587-residue polypeptide: Aspartate--tRNA ligase (587 aa).

E174 lines the L-aspartate pocket. The aspartate stretch occupies residues 198-201 (QITK). R220 serves as a coordination point for L-aspartate. ATP is bound by residues 220–222 (RDE) and Q229. H443 contacts L-aspartate. ATP is bound at residue E477. R484 lines the L-aspartate pocket. 529 to 532 (GLDR) is an ATP binding site.

The protein belongs to the class-II aminoacyl-tRNA synthetase family. Type 1 subfamily. In terms of assembly, homodimer.

It is found in the cytoplasm. The catalysed reaction is tRNA(Asp) + L-aspartate + ATP = L-aspartyl-tRNA(Asp) + AMP + diphosphate. Functionally, catalyzes the attachment of L-aspartate to tRNA(Asp) in a two-step reaction: L-aspartate is first activated by ATP to form Asp-AMP and then transferred to the acceptor end of tRNA(Asp). The polypeptide is Aspartate--tRNA ligase (Streptococcus pneumoniae (strain Hungary19A-6)).